Reading from the N-terminus, the 453-residue chain is GTPase Der (453 aa).

EngA-type G domains are found at residues 3–167 and 187–360; these read FTLA…PAQT and IKVA…AVWN. GTP is bound by residues 9–16, 56–60, 119–122, 193–200, 240–244, and 305–308; these read GRPNVGKS, DTAGL, NKSE, GRPNAGKS, and NKSD. One can recognise a KH-like domain in the interval 361–445; the sequence is TRIPTNPLNR…PIRLTLREKG (85 aa).

Belongs to the TRAFAC class TrmE-Era-EngA-EngB-Septin-like GTPase superfamily. EngA (Der) GTPase family. As to quaternary structure, associates with the 50S ribosomal subunit.

In terms of biological role, GTPase that plays an essential role in the late steps of ribosome biogenesis. The chain is GTPase Der from Azorhizobium caulinodans (strain ATCC 43989 / DSM 5975 / JCM 20966 / LMG 6465 / NBRC 14845 / NCIMB 13405 / ORS 571).